The following is a 257-amino-acid chain: S-methyl-5'-thioadenosine phosphorylase (257 aa).

Residues Ser-10 and 50–51 (RH) each bind phosphate. Cys-130 and Cys-195 form a disulfide bridge. Substrate is bound at residue Met-180. Thr-181 lines the phosphate pocket. 204-206 (DYD) provides a ligand contact to substrate. Cys-246 and Cys-248 are oxidised to a cystine.

It belongs to the PNP/MTAP phosphorylase family. MTAP subfamily. As to quaternary structure, homohexamer. Dimer of a homotrimer.

The catalysed reaction is S-methyl-5'-thioadenosine + phosphate = 5-(methylsulfanyl)-alpha-D-ribose 1-phosphate + adenine. It functions in the pathway amino-acid biosynthesis; L-methionine biosynthesis via salvage pathway; S-methyl-5-thio-alpha-D-ribose 1-phosphate from S-methyl-5'-thioadenosine (phosphorylase route): step 1/1. Catalyzes the reversible phosphorylation of S-methyl-5'-thioadenosine (MTA) to adenine and 5-methylthioribose-1-phosphate. Involved in the breakdown of MTA, a major by-product of polyamine biosynthesis. Responsible for the first step in the methionine salvage pathway after MTA has been generated from S-adenosylmethionine. Has broad substrate specificity with 6-aminopurine nucleosides as preferred substrates. This Pyrococcus furiosus (strain ATCC 43587 / DSM 3638 / JCM 8422 / Vc1) protein is S-methyl-5'-thioadenosine phosphorylase.